We begin with the raw amino-acid sequence, 399 residues long: S-adenosylmethionine synthase (399 aa).

H17 contributes to the ATP binding site. Residue D19 participates in Mg(2+) binding. A K(+)-binding site is contributed by E45. 2 residues coordinate L-methionine: E58 and Q101. The interval 101-111 (QSADIAMGVDQ) is flexible loop. ATP-binding positions include 177-179 (DGK), 244-245 (RF), D253, 259-260 (RK), A276, and K280. Residue D253 coordinates L-methionine. K284 is a binding site for L-methionine.

This sequence belongs to the AdoMet synthase family. In terms of assembly, homotetramer; dimer of dimers. Mg(2+) serves as cofactor. It depends on K(+) as a cofactor.

It is found in the cytoplasm. It carries out the reaction L-methionine + ATP + H2O = S-adenosyl-L-methionine + phosphate + diphosphate. It functions in the pathway amino-acid biosynthesis; S-adenosyl-L-methionine biosynthesis; S-adenosyl-L-methionine from L-methionine: step 1/1. Functionally, catalyzes the formation of S-adenosylmethionine (AdoMet) from methionine and ATP. The overall synthetic reaction is composed of two sequential steps, AdoMet formation and the subsequent tripolyphosphate hydrolysis which occurs prior to release of AdoMet from the enzyme. This Bacillus cereus (strain G9842) protein is S-adenosylmethionine synthase.